Reading from the N-terminus, the 321-residue chain is Ferrochelatase (321 aa).

Positions 194 and 275 each coordinate Fe cation.

It belongs to the ferrochelatase family.

It is found in the cytoplasm. It catalyses the reaction heme b + 2 H(+) = protoporphyrin IX + Fe(2+). The protein operates within porphyrin-containing compound metabolism; protoheme biosynthesis; protoheme from protoporphyrin-IX: step 1/1. Catalyzes the ferrous insertion into protoporphyrin IX. This Wigglesworthia glossinidia brevipalpis protein is Ferrochelatase.